A 389-amino-acid chain; its full sequence is Chalcone synthase 1A (389 aa).

Cysteine 164 is a catalytic residue.

This sequence belongs to the thiolase-like superfamily. Chalcone/stilbene synthases family.

It carries out the reaction (E)-4-coumaroyl-CoA + 3 malonyl-CoA + 3 H(+) = 2',4,4',6'-tetrahydroxychalcone + 3 CO2 + 4 CoA. The protein operates within secondary metabolite biosynthesis; flavonoid biosynthesis. In terms of biological role, the primary product of this enzyme is 4,2',4',6'-tetrahydroxychalcone (also termed naringenin-chalcone or chalcone) which can under specific conditions spontaneously isomerize into naringenin. The sequence is that of Chalcone synthase 1A (CHS1A) from Solanum tuberosum (Potato).